A 124-amino-acid chain; its full sequence is UPF0231 protein Sama_0645 (124 aa).

It belongs to the UPF0231 family.

The protein is UPF0231 protein Sama_0645 of Shewanella amazonensis (strain ATCC BAA-1098 / SB2B).